The chain runs to 238 residues: Probable succinyl-CoA:3-ketoacid coenzyme A transferase subunit A (238 aa).

A CoA-binding site is contributed by 24–30; the sequence is GGFGLCG.

The protein belongs to the 3-oxoacid CoA-transferase subunit A family. Heterodimer of a subunit A and a subunit B.

The enzyme catalyses a 3-oxo acid + succinyl-CoA = a 3-oxoacyl-CoA + succinate. The protein is Probable succinyl-CoA:3-ketoacid coenzyme A transferase subunit A (scoA) of Bacillus subtilis (strain 168).